Here is a 274-residue protein sequence, read N- to C-terminus: MPELPEVETVCRGLEKLIIGKKISSIEIRYPKMIKTDLEEFQRELPSQIIESMGRRGKYLLFYLTDKVLISHLRMEGKYFYYPDQGPERKHAHVFFHFEDGGTLVYEDVRKFGTMELLVPDLLDVYFISKKLGPEPSEQDFDLQVFQSALAKSKKPIKSHLLDQTLVAGLGNIYVDEVLWRAQVHPARPSQTLTAEEATAIHDQTIAVLGQAVEKGGSTIRTYTNAFGEDGSMQDFHQVYDKTGQECVRCGTIIEKIQLGGRGTHFCPNCQRRD.

Residue P2 is the Schiff-base intermediate with DNA of the active site. The active-site Proton donor is the E3. K58 acts as the Proton donor; for beta-elimination activity in catalysis. DNA contacts are provided by H91 and R110. An FPG-type zinc finger spans residues 238 to 272; sequence QVYDKTGQECVRCGTIIEKIQLGGRGTHFCPNCQR. R262 (proton donor; for delta-elimination activity) is an active-site residue.

The protein belongs to the FPG family. In terms of assembly, monomer. Requires Zn(2+) as cofactor.

The enzyme catalyses Hydrolysis of DNA containing ring-opened 7-methylguanine residues, releasing 2,6-diamino-4-hydroxy-5-(N-methyl)formamidopyrimidine.. The catalysed reaction is 2'-deoxyribonucleotide-(2'-deoxyribose 5'-phosphate)-2'-deoxyribonucleotide-DNA = a 3'-end 2'-deoxyribonucleotide-(2,3-dehydro-2,3-deoxyribose 5'-phosphate)-DNA + a 5'-end 5'-phospho-2'-deoxyribonucleoside-DNA + H(+). Its function is as follows. Involved in base excision repair of DNA damaged by oxidation or by mutagenic agents. Acts as a DNA glycosylase that recognizes and removes damaged bases. Has a preference for oxidized purines, such as 7,8-dihydro-8-oxoguanine (8-oxoG). Has AP (apurinic/apyrimidinic) lyase activity and introduces nicks in the DNA strand. Cleaves the DNA backbone by beta-delta elimination to generate a single-strand break at the site of the removed base with both 3'- and 5'-phosphates. This chain is Formamidopyrimidine-DNA glycosylase, found in Streptococcus pneumoniae serotype 4 (strain ATCC BAA-334 / TIGR4).